A 392-amino-acid chain; its full sequence is Protein O-glucosyltransferase 1 (392 aa).

A signal peptide spans 1–23; it reads MEWWASSPLRLWLLLFLLPSAQG. N-linked (GlcNAc...) asparagine glycosylation is found at Asn-40 and Asn-53. 4 disulfides stabilise this stretch: Cys-49/Cys-56, Cys-54/Cys-357, Cys-102/Cys-108, and Cys-263/Cys-286. An interaction with the consensus sequence C-X-S-X-[PA]-C in peptide substrates region spans residues 103–107; sequence MFPSR. The active-site Proton donor/acceptor is the Asp-133. The interval 172–178 is interaction with the consensus sequence C-X-S-X-[PA]-C in peptide substrates; that stretch reads AVWPIYP. Residue Tyr-177 coordinates UDP-alpha-D-glucose. Asn-204 carries an N-linked (GlcNAc...) asparagine glycan. Residues Ser-212, Arg-218, and 274–279 contribute to the UDP-alpha-D-glucose site; that span reads VAASFR. A glycan (N-linked (GlcNAc...) asparagine) is linked at Asn-373. Residues 389-392 carry the Prevents secretion from ER motif; it reads KTEL.

This sequence belongs to the glycosyltransferase 90 family. As to expression, expressed in most adult tissues at different intensities. Abundantly expressed in liver. Expressed also in brain, heart, skeletal muscle, spleen, kidney, placenta, lung and peripheral blood leukocyte. Not detectable in colon, thymus and small intestine. Expressed in the epidermis, especially in the upper parts, stratum spinosum and stratum granulosum (at protein level).

The protein resides in the endoplasmic reticulum lumen. It carries out the reaction L-seryl-[EGF-like domain protein] + UDP-alpha-D-xylose = 3-O-(beta-D-xylosyl)-L-seryl-[EGF-like domain protein] + UDP + H(+). The enzyme catalyses L-seryl-[EGF-like domain protein] + UDP-alpha-D-glucose = 3-O-(beta-D-glucosyl)-L-seryl-[EGF-like domain protein] + UDP + H(+). It functions in the pathway protein modification; protein glycosylation. Dual specificity glycosyltransferase that catalyzes the transfer of glucose and xylose from UDP-glucose and UDP-xylose, respectively, to a serine residue found in the consensus sequence of C-X-S-X-P-C. Specifically targets extracellular EGF repeats of protein such as CRB2, F7, F9 and NOTCH2. Acts as a positive regulator of Notch signaling by mediating O-glucosylation of Notch, leading to regulate muscle development. Notch glucosylation does not affect Notch ligand binding. Required during early development to promote gastrulation: acts by mediating O-glucosylation of CRB2, which is required for CRB2 localization to the cell membrane. This Homo sapiens (Human) protein is Protein O-glucosyltransferase 1.